Reading from the N-terminus, the 252-residue chain is Trans-aconitate 2-methyltransferase (252 aa).

Belongs to the methyltransferase superfamily. Tam family.

The protein localises to the cytoplasm. It catalyses the reaction trans-aconitate + S-adenosyl-L-methionine = (E)-3-(methoxycarbonyl)pent-2-enedioate + S-adenosyl-L-homocysteine. Its function is as follows. Catalyzes the S-adenosylmethionine monomethyl esterification of trans-aconitate. In Enterobacter sp. (strain 638), this protein is Trans-aconitate 2-methyltransferase.